The primary structure comprises 726 residues: Delta-1-pyrroline-5-carboxylate synthase B (726 aa).

Positions 1-296 (MTEIDRSRAF…WAPVVDTTSR (296 aa)) are glutamate 5-kinase. 3 residues coordinate substrate: Ser-60, Asp-157, and Asn-176. Residues 196–197 (SD) and 236–242 (RGGMTAK) contribute to the ATP site. The gamma-glutamyl phosphate reductase stretch occupies residues 297–717 (DMAVAARESS…YTHKDLPVLQ (421 aa)).

It in the N-terminal section; belongs to the glutamate 5-kinase family. The protein in the C-terminal section; belongs to the gamma-glutamyl phosphate reductase family.

It carries out the reaction L-glutamate + ATP = L-glutamyl 5-phosphate + ADP. The catalysed reaction is L-glutamate 5-semialdehyde + phosphate + NADP(+) = L-glutamyl 5-phosphate + NADPH + H(+). It functions in the pathway amino-acid biosynthesis; L-proline biosynthesis; L-glutamate 5-semialdehyde from L-glutamate: step 1/2. Its pathway is amino-acid biosynthesis; L-proline biosynthesis; L-glutamate 5-semialdehyde from L-glutamate: step 2/2. In terms of biological role, P5CS plays a key role in proline biosynthesis, leading to osmoregulation in plants. The protein is Delta-1-pyrroline-5-carboxylate synthase B (P5CSB) of Arabidopsis thaliana (Mouse-ear cress).